Here is a 1405-residue protein sequence, read N- to C-terminus: DNA-directed RNA polymerase subunit beta' (1405 aa).

Residues Cys-71, Cys-73, Cys-86, and Cys-89 each contribute to the Zn(2+) site. Asp-462, Asp-464, and Asp-466 together coordinate Mg(2+). Positions 820, 893, 900, and 903 each coordinate Zn(2+).

The protein belongs to the RNA polymerase beta' chain family. The RNAP catalytic core consists of 2 alpha, 1 beta, 1 beta' and 1 omega subunit. When a sigma factor is associated with the core the holoenzyme is formed, which can initiate transcription. It depends on Mg(2+) as a cofactor. Zn(2+) serves as cofactor.

The enzyme catalyses RNA(n) + a ribonucleoside 5'-triphosphate = RNA(n+1) + diphosphate. Functionally, DNA-dependent RNA polymerase catalyzes the transcription of DNA into RNA using the four ribonucleoside triphosphates as substrates. The sequence is that of DNA-directed RNA polymerase subunit beta' from Methylorubrum populi (strain ATCC BAA-705 / NCIMB 13946 / BJ001) (Methylobacterium populi).